The sequence spans 127 residues: Protein ApaG (127 aa).

Positions 2 to 127 constitute an ApaG domain; it reads SELVEHIQVH…FRLAGPNQVH (126 aa).

This Chromohalobacter salexigens (strain ATCC BAA-138 / DSM 3043 / CIP 106854 / NCIMB 13768 / 1H11) protein is Protein ApaG.